Here is a 116-residue protein sequence, read N- to C-terminus: NADH-ubiquinone oxidoreductase chain 3 (116 aa).

3 consecutive transmembrane segments (helical) span residues 3–23 (LIMTILTITAALSLILATVSF), 56–76 (FFLVAILFLLFDLEIALLLPL), and 87–107 (GTFFWATTVLILLTLGLIYEW).

The protein belongs to the complex I subunit 3 family.

Its subcellular location is the mitochondrion membrane. The enzyme catalyses a ubiquinone + NADH + 5 H(+)(in) = a ubiquinol + NAD(+) + 4 H(+)(out). In terms of biological role, core subunit of the mitochondrial membrane respiratory chain NADH dehydrogenase (Complex I) that is believed to belong to the minimal assembly required for catalysis. Complex I functions in the transfer of electrons from NADH to the respiratory chain. The immediate electron acceptor for the enzyme is believed to be ubiquinone. The chain is NADH-ubiquinone oxidoreductase chain 3 (MT-ND3) from Carassius auratus (Goldfish).